Here is a 231-residue protein sequence, read N- to C-terminus: Dihydropteridine reductase (231 aa).

Position 6–30 (6–30 (LVLGGSGALGAEVVKFFKSKSWNTI)) interacts with NADP(+). Tyr-138 acts as the Proton acceptor in catalysis.

The protein belongs to the short-chain dehydrogenases/reductases (SDR) family. In terms of assembly, homodimer.

The catalysed reaction is 5,6,7,8-tetrahydropteridine + NAD(+) = 6,7-dihydropteridine + NADH + H(+). It carries out the reaction 5,6,7,8-tetrahydropteridine + NADP(+) = 6,7-dihydropteridine + NADPH + H(+). Its function is as follows. The product of this enzyme, tetrahydrobiopterin (BH-4), is an essential cofactor for phenylalanine, tyrosine, and tryptophan hydroxylases. The chain is Dihydropteridine reductase (qdpr) from Dictyostelium discoideum (Social amoeba).